An 87-amino-acid chain; its full sequence is U9-ctenitoxin-Pn1a (87 aa).

The signal sequence occupies residues 1 to 22; that stretch reads MWLKTQLFVLAIAVIALLEVHA. Positions 23–37 are excised as a propeptide; sequence EPESNDNNELVVEEA. Disulfide bonds link Cys-40-Cys-54, Cys-47-Cys-64, Cys-53-Cys-73, and Cys-66-Cys-71. Residues 75-87 constitute a propeptide that is removed on maturation; it reads KSLREMAAAAFGR.

The protein belongs to the neurotoxin 02 (plectoxin) family. 01 (Tx3) subfamily. In terms of tissue distribution, expressed by the venom gland.

It is found in the secreted. Its function is as follows. Antagonist of L-type calcium channels (Cav1/CACNA1). The protein is U9-ctenitoxin-Pn1a of Phoneutria nigriventer (Brazilian armed spider).